A 916-amino-acid polypeptide reads, in one-letter code: RNA-directed DNA polymerase from mobile element jockey (916 aa).

Positions 483-757 (SILRVGYFPK…HEYKYLGVIL (275 aa)) constitute a Reverse transcriptase domain. Positions 890–916 (RSASPRSRVRRRLKRHHPQDLLDRALT) are disordered. Basic residues predominate over residues 896 to 906 (SRVRRRLKRHH). Residues 907 to 916 (PQDLLDRALT) are compositionally biased toward basic and acidic residues.

It depends on Mg(2+) as a cofactor. Mn(2+) is required as a cofactor.

It carries out the reaction DNA(n) + a 2'-deoxyribonucleoside 5'-triphosphate = DNA(n+1) + diphosphate. With respect to regulation, inactivated by sulphydryl reagent. The chain is RNA-directed DNA polymerase from mobile element jockey (jockey\pol) from Drosophila funebris (Fruit fly).